The chain runs to 257 residues: V-type proton ATPase subunit D (257 aa).

The interval 215-257 (KEQEAAQKALEGPGPGEDAAHSENNPPRNLLASEEDNLPVLFN) is disordered.

Belongs to the V-ATPase D subunit family. In terms of assembly, V-ATPase is a heteromultimeric enzyme made up of two complexes: the ATP-hydrolytic V1 complex and the proton translocation V0 complex. The V1 complex consists of three catalytic AB heterodimers that form a heterohexamer, three peripheral stalks each consisting of EG heterodimers, one central rotor including subunits D and F, and the regulatory subunits C and H. The proton translocation complex V0 consists of the proton transport subunit a, a ring of proteolipid subunits c9c'', rotary subunit d, subunits e and f, and the accessory subunits vah-19/Ac45 and vah-20/PRR.

In terms of biological role, subunit of the V1 complex of vacuolar(H+)-ATPase (V-ATPase), a multisubunit enzyme composed of a peripheral complex (V1) that hydrolyzes ATP and a membrane integral complex (V0) that translocates protons. V-ATPase is responsible for acidifying and maintaining the pH of intracellular compartments and in some cell types, is targeted to the plasma membrane, where it is responsible for acidifying the extracellular environment. The chain is V-type proton ATPase subunit D from Caenorhabditis elegans.